Reading from the N-terminus, the 668-residue chain is Acyl-CoA-binding domain-containing protein 4 (668 aa).

One can recognise an ACB domain in the interval 12–106 (YPERFYAAAS…LEEDDPGWYS (95 aa)). An acyl-CoA is bound by residues Lys33, 48–52 (YALYQ), and Lys74. Kelch repeat units lie at residues 195–242 (KMYI…TLLA), 255–305 (KLLS…MVGK), 307–356 (LVIF…VHAE), 358–407 (FLLI…TIGE), 408–456 (NWFI…LVVS), and 463–508 (VLVA…VNNA). Residues Ser515 and Ser520 each carry the phosphoserine modification. Residues 538 to 647 (KVEGNSERII…EQAAMNAKRQ (110 aa)) adopt a coiled-coil conformation. Residues 639-668 (QAAMNAKRQGSGGVWGWLAGSPQEKDDDSP) are disordered.

This sequence belongs to the ACBP family. As to quaternary structure, interacts with RAP2-3/EBP, an ethylene-responsive element binding protein. In terms of tissue distribution, mostly expressed in roots, stems, and leaves, and, to a lower extent, in flowers and siliques.

It localises to the cytoplasm. Its function is as follows. Binds medium- and long-chain acyl-CoA esters with very high affinity. Can interact in vitro with oleoyl-CoA, barely with palmitoyl-CoA, but not with arachidonyl-CoA. May function as an intracellular carrier of acyl-CoA esters. Plays a role in the biosynthesis of membrane lipids including galactolipids and phospholipids. This Arabidopsis thaliana (Mouse-ear cress) protein is Acyl-CoA-binding domain-containing protein 4 (ACBP4).